The primary structure comprises 100 residues: Urease subunit gamma (100 aa).

The protein belongs to the urease gamma subunit family. In terms of assembly, heterotrimer of UreA (gamma), UreB (beta) and UreC (alpha) subunits. Three heterotrimers associate to form the active enzyme.

It localises to the cytoplasm. It carries out the reaction urea + 2 H2O + H(+) = hydrogencarbonate + 2 NH4(+). The protein operates within nitrogen metabolism; urea degradation; CO(2) and NH(3) from urea (urease route): step 1/1. The sequence is that of Urease subunit gamma from Nostoc punctiforme (strain ATCC 29133 / PCC 73102).